A 962-amino-acid polypeptide reads, in one-letter code: Putative primase C962R (962 aa).

Positions 607-775 (ELDARLWIMF…PDPGNPYEKK (169 aa)) constitute an SF3 helicase domain. 636–643 (GGGCNGKT) is a binding site for ATP.

Belongs to the asfivirus helicase C962R family.

The sequence is that of Putative primase C962R from African swine fever virus (strain Badajoz 1971 Vero-adapted) (Ba71V).